A 233-amino-acid chain; its full sequence is Putative quercetin 2,3-dioxygenase PM1685 (233 aa).

A divalent metal cation-binding residues include histidine 59, histidine 61, histidine 103, and glutamate 105.

This sequence belongs to the pirin family. A divalent metal cation serves as cofactor.

It carries out the reaction quercetin + O2 = 2-(3,4-dihydroxybenzoyloxy)-4,6-dihydroxybenzoate + CO. It functions in the pathway flavonoid metabolism; quercetin degradation. In terms of biological role, putative quercetin 2,3-dioxygenase. The protein is Putative quercetin 2,3-dioxygenase PM1685 of Pasteurella multocida (strain Pm70).